The sequence spans 180 residues: Large ribosomal subunit protein uL5 (180 aa).

This sequence belongs to the universal ribosomal protein uL5 family. As to quaternary structure, part of the 50S ribosomal subunit; part of the 5S rRNA/L5/L18/L25 subcomplex. Contacts the 5S rRNA and the P site tRNA. Forms a bridge to the 30S subunit in the 70S ribosome.

Its function is as follows. This is one of the proteins that bind and probably mediate the attachment of the 5S RNA into the large ribosomal subunit, where it forms part of the central protuberance. In the 70S ribosome it contacts protein S13 of the 30S subunit (bridge B1b), connecting the 2 subunits; this bridge is implicated in subunit movement. Contacts the P site tRNA; the 5S rRNA and some of its associated proteins might help stabilize positioning of ribosome-bound tRNAs. This Spiroplasma kunkelii protein is Large ribosomal subunit protein uL5.